Consider the following 297-residue polypeptide: Protein LRATD1 (297 aa).

Phosphoserine is present on Ser38. In terms of domain architecture, LRAT spans 138–233; sequence PAPEPPAPAP…CRFGKREFKA (96 aa).

The protein belongs to the LRATD family.

Its subcellular location is the cytoplasm. Functionally, may play a role in cell morphology and motility. In Bos taurus (Bovine), this protein is Protein LRATD1 (LRATD1).